A 350-amino-acid polypeptide reads, in one-letter code: tRNA uridine(34) hydroxylase (350 aa).

The Rhodanese domain maps to 146–240 (DDPDAVFIDM…YARRARAQGL (95 aa)). Catalysis depends on Cys-200, which acts as the Cysteine persulfide intermediate. Positions 319-328 (RRRRAGRENG) are enriched in basic and acidic residues. Residues 319–350 (RRRRAGRENGNKIFNKSRGRLNSKLSIPDPAE) form a disordered region.

Belongs to the TrhO family.

The enzyme catalyses uridine(34) in tRNA + AH2 + O2 = 5-hydroxyuridine(34) in tRNA + A + H2O. In terms of biological role, catalyzes oxygen-dependent 5-hydroxyuridine (ho5U) modification at position 34 in tRNAs. The protein is tRNA uridine(34) hydroxylase of Salmonella newport (strain SL254).